The chain runs to 343 residues: Twinfilin (343 aa).

2 consecutive ADF-H domains span residues 4–139 (QTGI…KHKI) and 177–312 (GINC…EELH). The interval 317-343 (NLRPQFSKPKGPPSRGAKRLTKPQAVE) is disordered.

The protein belongs to the actin-binding proteins ADF family. Twinfilin subfamily. In terms of assembly, interacts with G-actin; ADP-actin form.

It is found in the cytoplasm. Its subcellular location is the cytoskeleton. The protein localises to the cell cortex. In terms of biological role, actin-binding protein involved in motile and morphological processes. Inhibits actin polymerization, likely by sequestering G-actin. The sequence is that of Twinfilin (twf) from Aedes aegypti (Yellowfever mosquito).